A 449-amino-acid polypeptide reads, in one-letter code: Guanine nucleotide-binding protein alpha-2 subunit (449 aa).

The interval 1-91 is disordered; sequence MGLCASSEKN…TATANTSGSQ (91 aa). G2 carries N-myristoyl glycine lipidation. C4 carries S-palmitoyl cysteine lipidation. Composition is skewed to polar residues over residues 7–23 and 38–48; these read SEKN…SAGS and QKTVRTVNTAN. The segment covering 49–59 has biased composition (low complexity); sequence QQEKQQQRQQQ. Residues 72–91 show a composition bias toward polar residues; the sequence is NGSINNAISPTATANTSGSQ. The G-alpha domain maps to 122-448; that stretch reads KELKVLLLGA…ENTLKDSGVL (327 aa). The segment at 125-138 is G1 motif; the sequence is KVLLLGAGESGKST. GTP-binding residues include E133, S134, G135, K136, S137, T138, D245, L270, T276, G299, N365, K366, D368, and A420. Residue S137 participates in Mg(2+) binding. The interval 268 to 276 is G2 motif; it reads DILRSRQMT. Position 276 (T276) interacts with Mg(2+). Positions 292-301 are G3 motif; the sequence is MHIYDVGGQR. A G4 motif region spans residues 361–368; that stretch reads VLFLNKID. Positions 418-423 are G5 motif; that stretch reads TQATDT.

This sequence belongs to the G-alpha family. G(q) subfamily. As to quaternary structure, g proteins are composed of 3 units; alpha, beta and gamma. The alpha chain contains the guanine nucleotide binding site. GPA2 interacts with the kelch repeat beta-mimic proteins GPB1 and GPB2 and with the gamma subunit GPG1. Interacts with the G protein coupled receptor GPR1. Also interacts with regulators of G protein signaling (RGS) protein RGS2. It depends on Mg(2+) as a cofactor. Myristoylation at Gly-2 and palmitoylation at Cys-4 are required for membrane localization and function of the protein.

It localises to the cell membrane. Its activity is regulated as follows. Alternates between an inactive form bound to GDP and an active form bound to GTP. Activated by the G protein coupled receptor (GPCR) GPR1, which serves as a guanine nucleotide-exchange factor (GEF), and inactivated by RGS2, acting as a GTPase-activating protein (GAP) for GPA2. Alpha subunit of the heterotrimeric guanine nucleotide-binding protein (G protein) involved in glucose-induced cAMP signaling. Binds to its cognate transmembrane receptor GPR1, which senses extracellular carbon sources, and activates cAMP-PKA signaling and governs diploid pseudohyphal differentiation and haploid invasive growth. The G protein beta-mimic proteins GPB1 and GPB2 inhibit GPA2-GPR1 coupling, probably to reduce signaling in the absence of glucose. The sequence is that of Guanine nucleotide-binding protein alpha-2 subunit (GPA2) from Saccharomyces cerevisiae (strain ATCC 204508 / S288c) (Baker's yeast).